The primary structure comprises 282 residues: NADPH-dependent 7-cyano-7-deazaguanine reductase (282 aa).

88–90 (IES) serves as a coordination point for substrate. 90–91 (SK) is a binding site for NADPH. Cys190 functions as the Thioimide intermediate in the catalytic mechanism. Asp197 functions as the Proton donor in the catalytic mechanism. 229–230 (HE) lines the substrate pocket. 258–259 (RG) lines the NADPH pocket.

This sequence belongs to the GTP cyclohydrolase I family. QueF type 2 subfamily. In terms of assembly, homodimer.

Its subcellular location is the cytoplasm. It catalyses the reaction 7-aminomethyl-7-carbaguanine + 2 NADP(+) = 7-cyano-7-deazaguanine + 2 NADPH + 3 H(+). Its pathway is tRNA modification; tRNA-queuosine biosynthesis. Its function is as follows. Catalyzes the NADPH-dependent reduction of 7-cyano-7-deazaguanine (preQ0) to 7-aminomethyl-7-deazaguanine (preQ1). The polypeptide is NADPH-dependent 7-cyano-7-deazaguanine reductase (Escherichia coli (strain K12 / MC4100 / BW2952)).